A 333-amino-acid chain; its full sequence is DNA-directed RNA polymerase subunit alpha (333 aa).

Residues 1 to 234 (MQSSVNEFLT…QQLAAFVDLK (234 aa)) are alpha N-terminal domain (alpha-NTD). Positions 248–333 (IDPILLRPVD…SLKKDDKATA (86 aa)) are alpha C-terminal domain (alpha-CTD).

This sequence belongs to the RNA polymerase alpha chain family. In terms of assembly, homodimer. The RNAP catalytic core consists of 2 alpha, 1 beta, 1 beta' and 1 omega subunit. When a sigma factor is associated with the core the holoenzyme is formed, which can initiate transcription.

It catalyses the reaction RNA(n) + a ribonucleoside 5'-triphosphate = RNA(n+1) + diphosphate. Functionally, DNA-dependent RNA polymerase catalyzes the transcription of DNA into RNA using the four ribonucleoside triphosphates as substrates. This Pseudomonas aeruginosa (strain UCBPP-PA14) protein is DNA-directed RNA polymerase subunit alpha.